The sequence spans 249 residues: Ubiquinone/menaquinone biosynthesis C-methyltransferase UbiE (249 aa).

Residues T72, D93, and 121 to 122 contribute to the S-adenosyl-L-methionine site; that span reads DA.

The protein belongs to the class I-like SAM-binding methyltransferase superfamily. MenG/UbiE family.

The enzyme catalyses a 2-demethylmenaquinol + S-adenosyl-L-methionine = a menaquinol + S-adenosyl-L-homocysteine + H(+). The catalysed reaction is a 2-methoxy-6-(all-trans-polyprenyl)benzene-1,4-diol + S-adenosyl-L-methionine = a 5-methoxy-2-methyl-3-(all-trans-polyprenyl)benzene-1,4-diol + S-adenosyl-L-homocysteine + H(+). Its pathway is quinol/quinone metabolism; menaquinone biosynthesis; menaquinol from 1,4-dihydroxy-2-naphthoate: step 2/2. The protein operates within cofactor biosynthesis; ubiquinone biosynthesis. Its function is as follows. Methyltransferase required for the conversion of demethylmenaquinol (DMKH2) to menaquinol (MKH2) and the conversion of 2-polyprenyl-6-methoxy-1,4-benzoquinol (DDMQH2) to 2-polyprenyl-3-methyl-6-methoxy-1,4-benzoquinol (DMQH2). This Teredinibacter turnerae (strain ATCC 39867 / T7901) protein is Ubiquinone/menaquinone biosynthesis C-methyltransferase UbiE.